The following is a 257-amino-acid chain: NAD-capped RNA hydrolase NudC (257 aa).

Arg-69 serves as a coordination point for substrate. Zn(2+)-binding residues include Cys-98 and Cys-101. A substrate-binding site is contributed by Glu-111. Cys-116 and Cys-119 together coordinate Zn(2+). Residue Tyr-124 coordinates substrate. The Nudix hydrolase domain maps to 125–248 (PQIAPCIIVA…TVARRLIEDT (124 aa)). The a divalent metal cation site is built by Ala-158, Glu-174, and Glu-178. The short motif at 159 to 180 (GFVEVGETLEQAVAREVMEESG) is the Nudix box element. 192–199 (QPWPFPQS) contributes to the substrate binding site. Glu-219 contacts a divalent metal cation. Ala-241 is a substrate binding site.

The protein belongs to the Nudix hydrolase family. NudC subfamily. In terms of assembly, homodimer. The cofactor is Mg(2+). Mn(2+) is required as a cofactor. Zn(2+) serves as cofactor.

The catalysed reaction is a 5'-end NAD(+)-phospho-ribonucleoside in mRNA + H2O = a 5'-end phospho-adenosine-phospho-ribonucleoside in mRNA + beta-nicotinamide D-ribonucleotide + 2 H(+). The enzyme catalyses NAD(+) + H2O = beta-nicotinamide D-ribonucleotide + AMP + 2 H(+). It catalyses the reaction NADH + H2O = reduced beta-nicotinamide D-ribonucleotide + AMP + 2 H(+). In terms of biological role, mRNA decapping enzyme that specifically removes the nicotinamide adenine dinucleotide (NAD) cap from a subset of mRNAs by hydrolyzing the diphosphate linkage to produce nicotinamide mononucleotide (NMN) and 5' monophosphate mRNA. The NAD-cap is present at the 5'-end of some mRNAs and stabilizes RNA against 5'-processing. Has preference for mRNAs with a 5'-end purine. Catalyzes the hydrolysis of a broad range of dinucleotide pyrophosphates. In Salmonella heidelberg (strain SL476), this protein is NAD-capped RNA hydrolase NudC.